We begin with the raw amino-acid sequence, 78 residues long: Sperm-specific protein Phi-0 (78 aa).

Composition is skewed to basic residues over residues 1–21, 31–57, and 64–78; these read MVARRQTKKARKPAARRRSAA, AASRRRPKSAKKAKPAARRRSSVKPKA, and VRRRSRRIRRASVSK. The segment at 1 to 78 is disordered; it reads MVARRQTKKA…RRIRRASVSK (78 aa).

It localises to the nucleus. The protein localises to the chromosome. Functionally, involved in nuclear basic protein transition: histones are replaced by spermatid specific proteins which are themselves replaced by protamines in late spermatids. This chain is Sperm-specific protein Phi-0, found in Holothuria tubulosa (Tubular sea cucumber).